Reading from the N-terminus, the 570-residue chain is ATP-dependent RNA helicase ROK1 (570 aa).

Positions 69–78 are enriched in basic and acidic residues; the sequence is ETHAEDKEDK. The tract at residues 69-96 is disordered; the sequence is ETHAEDKEDKDNDNEEDEIKEEESLQYQ. Over residues 79 to 89 the composition is skewed to acidic residues; sequence DNDNEEDEIKE. Positions 131–159 match the Q motif motif; it reads DLITRFSFDKRLLNNLILNHFTEPTPIQC. A Helicase ATP-binding domain is found at 162-342; it reads IPLALNNRDM…KSIMMDPVRV (181 aa). Position 175 to 182 (175 to 182) interacts with ATP; it reads APTGSGKT. Residues 289-292 carry the DEAD box motif; it reads DEAD. In terms of domain architecture, Helicase C-terminal spans 353–515; that stretch reads SIEQKLVFCG…EISEWMEKVS (163 aa).

This sequence belongs to the DEAD box helicase family. DDX52/ROK1 subfamily. In terms of assembly, interacts with the U3 snoRNA and is associated with the 90S and 40S pre-ribosomes.

The protein localises to the nucleus. It is found in the nucleolus. It catalyses the reaction ATP + H2O = ADP + phosphate + H(+). In terms of biological role, ATP-dependent RNA helicase involved in 40S ribosomal subunit biogenesis. Required for the processing and cleavage of 35S pre-rRNA at sites A0, A1, and A2, leading to mature 18S rRNA. The protein is ATP-dependent RNA helicase ROK1 (ROK1) of Vanderwaltozyma polyspora (strain ATCC 22028 / DSM 70294 / BCRC 21397 / CBS 2163 / NBRC 10782 / NRRL Y-8283 / UCD 57-17) (Kluyveromyces polysporus).